The following is a 408-amino-acid chain: Apoptosis-inducing factor homolog A (408 aa).

Residues 34 to 38 (GCGFG), Arg69, and Asp314 contribute to the FAD site.

This sequence belongs to the FAD-dependent oxidoreductase family. Requires FAD as cofactor.

Its function is as follows. Putative FAD-dependent oxidoreductase. The polypeptide is Apoptosis-inducing factor homolog A (aifA) (Dictyostelium discoideum (Social amoeba)).